A 2530-amino-acid polypeptide reads, in one-letter code: Agglutinin-like protein 2 (2530 aa).

A signal peptide spans 1-17; sequence MLLQFLLLSLCVSVATA. 4 disulfide bridges follow: Cys-73-Cys-150, Cys-96-Cys-112, Cys-205-Cys-297, and Cys-227-Cys-256. N-linked (GlcNAc...) asparagine glycans are attached at residues Asn-253 and Asn-315. 6 ALS repeats span residues 364 to 395, 400 to 431, 437 to 468, 473 to 504, 509 to 540, and 545 to 576; these read TTITTSYVGVTTSYSTKTAPIGETATVIVDVP, TTVTSEWTGTITTTTTRTNPTDSIDTVVVQVP, VTTTEYWSQSYATTTTVTAPPGGTDSVIIREP, VTTTEYWSQSYATSSTVTAPPGGTDTVIIREP, and VTTTEYWSQSFATTTTITAPPGETDTVLIREP. Asn-578 carries an N-linked (GlcNAc...) asparagine glycan. One copy of the ALS 7 repeat lies at 581-612; sequence VTTTEYWSQSYVTTSTITAPPGGTDTVIIREP. Asn-614 is a glycosylation site (N-linked (GlcNAc...) asparagine). ALS repeat units lie at residues 617-648, 653-684, 689-720, 725-756, 761-792, 797-828, and 833-864; these read VTTTEYWSQSYATTTTVTAPPGGTDTVIIREP, VTTTEYWSQSYATTTTVTGPPGGTDTVIIREP, and VTTTEYWSQSYATTTTVTAPPGGTATVIIREP. N-linked (GlcNAc...) asparagine glycosylation occurs at Asn-866. ALS repeat units lie at residues 869–900, 905–936, 941–972, and 977–1008; these read VTTTEYWSQSYATTTTVTGPPGGTDTVIIREP and VTTTEYWSQSYATTTTVTAPPGGTATVIIREP. Residues 954–967 show a composition bias toward low complexity; sequence TTTVTGPPGGTDTV. The interval 954–975 is disordered; sequence TTTVTGPPGGTDTVIIREPPNP. Asn-1010 carries an N-linked (GlcNAc...) asparagine glycan. ALS repeat units lie at residues 1013–1044, 1049–1077, 1085–1116, and 1121–1152; these read VTTTEYWSQSYATTTTVTGPPGGTDTVIIREP, VTTTEYWSQSYATTTTVTAPPGGTATVII, and VTTTEYWSQSYATTTTVTAPPGGTATVIIREP. Asn-1154 carries N-linked (GlcNAc...) asparagine glycosylation. ALS repeat units lie at residues 1157 to 1188, 1193 to 1224, 1229 to 1260, 1265 to 1296, 1301 to 1332, and 1337 to 1368; these read VTTTEYWSQSYATTTTVTGPPGGTDTVIIREP, VTTTEYWSQSFATTTTVTAPPGGTDSVIIREP, VTTTEYWSQSYATTTTVTAPPGGTDSVIIREP, and VTTTEYWSQSYATTTTVTAPPGGTATVIIREP. Asn-1370 carries N-linked (GlcNAc...) asparagine glycosylation. The stretch at 1373 to 1404 is one ALS 29 repeat; sequence VTTTEYWSQSYATTTTVTAPPGGTATVIIREP. N-linked (GlcNAc...) asparagine glycosylation is present at Asn-1406. Residues 1409-1440 form an ALS 30 repeat; the sequence is VTTTEYWSQSYATTTTITAPPGDTDTVIIREP. Asn-1442 carries an N-linked (GlcNAc...) asparagine glycan. 2 ALS repeats span residues 1445-1476 and 1481-1512; these read VTTTEYWSQSFATTTTVTAPPGGTDSVIIREP and VTTTEYWSQSYATTTTVTAPPGGTATVIIREP. Residue Asn-1514 is glycosylated (N-linked (GlcNAc...) asparagine). Residues 1517–1548 form an ALS 33 repeat; sequence VTTTEYWSQSYATTTTVTAPPGGTATVIIREP. A glycan (N-linked (GlcNAc...) asparagine) is linked at Asn-1550. An ALS 34 repeat occupies 1553 to 1584; that stretch reads VTTTEYWSQSYATTTTITAPPGDTDTVIIREP. N-linked (GlcNAc...) asparagine glycosylation is present at Asn-1586. The ALS 35 repeat unit spans residues 1589–1620; the sequence is VTTTEYWSQSYATTTTVTAPPGGTDTVIIREP. Asn-1622 is a glycosylation site (N-linked (GlcNAc...) asparagine). An ALS 36 repeat occupies 1625 to 1656; that stretch reads VTTTEYWSQSYATTTTVTAPPGGTATVIIREP. Asn-1658 is a glycosylation site (N-linked (GlcNAc...) asparagine). ALS repeat units follow at residues 1661–1692 and 1697–1728; these read VTTTEYWSQSYATTTTVTGPPGSTDTVIIREP and VTTTEYWSQSYATTTTVTAPPGGTATVIIREP. N-linked (GlcNAc...) asparagine glycosylation occurs at Asn-1730. Residues 1733–1764 form an ALS 39 repeat; it reads VTTTEYWSQSYATTTTVTAPPGGTDTVIIREP. A glycan (N-linked (GlcNAc...) asparagine) is linked at Asn-1766. 2 ALS repeats span residues 1769-1800 and 1805-1836; these read VTTTEYWSQSYATTTTVTAPPGGTDTVIIREP and VTTTEYWSQSYATTTTVTAPPGGTATVIIREP. Asn-1838 carries N-linked (GlcNAc...) asparagine glycosylation. ALS repeat units follow at residues 1841 to 1872 and 1877 to 1907; these read VTTTEYWSESYATTTTVTGPPGGTDVILIREP and VTTTEYWSESYATTTTITAPPGATDSVRIRE. Asn-1910 carries an N-linked (GlcNAc...) asparagine glycan. ALS repeat units lie at residues 1913–1944 and 1949–1980; these read VTTTEYWSQSYATTTTVTAPPGGTDSVIIREP and VTTTEYWSQSYATTTTVTAPPGGTATVIIREP. Asn-1982 is a glycosylation site (N-linked (GlcNAc...) asparagine). 3 ALS repeats span residues 1985 to 2016, 2021 to 2052, and 2057 to 2088; these read VTTTEYWSQSYATTTTVTAPPGGTDTVIIREP and VTTTEYWSQSYATTTTVTAPPGGTATVIIREP. A glycan (N-linked (GlcNAc...) asparagine) is linked at Asn-2090. 2 ALS repeats span residues 2093 to 2124 and 2129 to 2157; these read VTTTEYWSQSYATTTTVTGPPGGTDTVIIREP and VTTTEYWSQSYATTLTITAPPGGTNSVII. The N-linked (GlcNAc...) asparagine glycan is linked to Asn-2197. Disordered stretches follow at residues 2200–2235 and 2274–2494; these read VTHLPSSSSKPVDIPSSDVVTSTNDNSLTSLTGSEN and TTII…QQTT. Residues 2204 to 2233 are compositionally biased toward low complexity; sequence PSSSSKPVDIPSSDVVTSTNDNSLTSLTGS. Asn-2281 carries an N-linked (GlcNAc...) asparagine glycan. Over residues 2282–2296 the composition is skewed to low complexity; that stretch reads GSGKSKSGELSSTGS. 2 stretches are compositionally biased toward polar residues: residues 2329–2420 and 2429–2452; these read STET…SATA and NGATTKGQDTAGGNSNGSTATTNI. N-linked (GlcNAc...) asparagine glycans are attached at residues Asn-2444 and Asn-2466. Low complexity-rich tracts occupy residues 2453 to 2471 and 2482 to 2494; these read QGGNNEPGNQPGTNTTGEP and SISQPTTLSQQTT. The GPI-anchor amidated aspartate moiety is linked to residue Asp-2507. A propeptide spans 2508 to 2530 (removed in mature form); the sequence is GSGSIVQHSGWLYVLLTAISIFF.

This sequence belongs to the ALS family. In terms of processing, N-glycosylated and O-glycosylated. Post-translationally, the GPI-anchor is attached to the protein in the endoplasmic reticulum and serves to target the protein to the cell surface. There, the glucosamine-inositol phospholipid moiety is cleaved off and the GPI-modified mannoprotein is covalently attached via its lipidless GPI glycan remnant to the 1,6-beta-glucan of the outer cell wall layer.

The protein localises to the cell membrane. Its subcellular location is the secreted. The protein resides in the cell wall. Cell surface adhesion protein which mediates both yeast-to-host tissue adherence and yeast aggregation. Plays an important role in the pathogenesis of C.albicans infections. In Candida albicans (strain SC5314 / ATCC MYA-2876) (Yeast), this protein is Agglutinin-like protein 2 (ALS2).